Here is a 749-residue protein sequence, read N- to C-terminus: Patatin-like phospholipase domain-containing protein An01g04180 (749 aa).

Residues 1-21 form a disordered region; it reads MNGAEKSAAGDTYDPSTIPDY. A helical membrane pass occupies residues 87–107; that stretch reads WPFLFTVFGWITALAFAYTLT. Positions 277-468 constitute a PNPLA domain; sequence LCLSGGATFA…RTDIPIKALN (192 aa). Positions 308–312 match the GXSXG motif; it reads GTSGG. S310 (nucleophile) is an active-site residue. Residue D455 is the Proton acceptor of the active site. Positions 619–726 are disordered; the sequence is AGGRPISPAP…STGSSIFEEV (108 aa). Basic and acidic residues predominate over residues 649-664; that stretch reads PLNERLDHNLPERRGD. The span at 685 to 707 shows a compositional bias: low complexity; it reads SLSENSSNESAARPSSSSSSSRL.

It belongs to the PLPL family.

Its subcellular location is the membrane. Functionally, probable lipid hydrolase. The sequence is that of Patatin-like phospholipase domain-containing protein An01g04180 from Aspergillus niger (strain ATCC MYA-4892 / CBS 513.88 / FGSC A1513).